A 1222-amino-acid chain; its full sequence is ATP-dependent helicase/nuclease subunit A (1222 aa).

Residues 39–495 (QKRTAQQIEA…ILLKENFRSQ (457 aa)) form the UvrD-like helicase ATP-binding domain. 60–67 (ASAGSGKT) is an ATP binding site. The UvrD-like helicase C-terminal domain occupies 524–810 (QLIAGSHAQT…NLMTIHKSKG (287 aa)).

It belongs to the helicase family. AddA subfamily. In terms of assembly, heterodimer of AddA and AddB/RexB. Mg(2+) serves as cofactor.

It catalyses the reaction Couples ATP hydrolysis with the unwinding of duplex DNA by translocating in the 3'-5' direction.. The enzyme catalyses ATP + H2O = ADP + phosphate + H(+). In terms of biological role, the heterodimer acts as both an ATP-dependent DNA helicase and an ATP-dependent, dual-direction single-stranded exonuclease. Recognizes the chi site generating a DNA molecule suitable for the initiation of homologous recombination. The AddA nuclease domain is required for chi fragment generation; this subunit has the helicase and 3' -&gt; 5' nuclease activities. The polypeptide is ATP-dependent helicase/nuclease subunit A (Streptococcus pyogenes serotype M2 (strain MGAS10270)).